We begin with the raw amino-acid sequence, 63 residues long: Metallothionein-2 (63 aa).

The tract at residues 1–30 (MDPQDCTCAAGDSCSCAGSCKCKNCRCQSC) is beta. A divalent metal cation contacts are provided by Cys6, Cys8, Cys14, Cys16, Cys20, Cys22, Cys25, Cys27, Cys30, Cys34, Cys35, Cys37, Cys38, Cys42, Cys45, Cys49, Cys51, Cys59, Cys61, and Cys62. The alpha stretch occupies residues 31–63 (RKSCCSCCPASCSNCAKGCVCKEPSSSKCSCCH).

Belongs to the metallothionein superfamily. Type 1 family.

Its function is as follows. Metallothioneins have a high content of cysteine residues that bind various heavy metals. The polypeptide is Metallothionein-2 (Columba livia (Rock dove)).